A 681-amino-acid chain; its full sequence is U3 small nucleolar ribonucleoprotein protein MPP10 (681 aa).

Ser61, Ser120, and Ser139 each carry phosphoserine. A compositionally biased stretch (acidic residues) spans 105–147; sequence SLLPESEEQEREEDGSEIEADDKEDLEDLEEEEVSDMGNDDPE. Disordered regions lie at residues 105–202 and 216–364; these read SLLP…IVDD and NIEK…EKRQ. Residues 109 to 138 adopt a coiled-coil conformation; sequence ESEEQEREEDGSEIEADDKEDLEDLEEEEV. The span at 148–162 shows a compositional bias: basic and acidic residues; the sequence is MGERAENSSKSDLRK. Residues Ser163, Ser167, and Ser171 each carry the phosphoserine modification. Over residues 180 to 190 the composition is skewed to polar residues; that stretch reads LEQQSKVQNKG. Composition is skewed to basic and acidic residues over residues 193–202 and 216–226; these read KPREKSIVDD and NIEKEEERKDD. Residues 205–239 are a coiled coil; that stretch reads FKLSEMEAYLENIEKEEERKDDNDEEEEDIDFFED. Residues 227–247 are compositionally biased toward acidic residues; it reads NDEEEEDIDFFEDIDSDEDEG. At Ser242 the chain carries Phosphoserine. Basic residues predominate over residues 253–264; it reads KKLKSGKSSRNL. Ser275 and Ser289 each carry phosphoserine. The segment covering 280 to 290 has biased composition (basic and acidic residues); sequence TNVHDDELDSN. Coiled coils occupy residues 284 to 324 and 348 to 382; these read DDEL…NKQH and NVKKNSDEVKSSFEKRQEKMNEKIASLEKELLEKK. Acidic residues predominate over residues 291-318; it reads KEDDEIAEEEAEELSISETDEDDDLQEN. Basic and acidic residues predominate over residues 319 to 329; that stretch reads EDNKQHKESLK. Lys350 is covalently cross-linked (Glycyl lysine isopeptide (Lys-Gly) (interchain with G-Cter in SUMO2)). Residues 351–364 are compositionally biased toward basic and acidic residues; it reads KNSDEVKSSFEKRQ. Glycyl lysine isopeptide (Lys-Gly) (interchain with G-Cter in SUMO2) cross-links involve residues Lys382 and Lys394. Positions 469–490 form a coiled coil; that stretch reads LAEIYEQEYIKLNQQKTAEEEN. Residue Lys555 forms a Glycyl lysine isopeptide (Lys-Gly) (interchain with G-Cter in SUMO2) linkage. The segment covering 558-575 has biased composition (basic and acidic residues); sequence NKAGDIKTAAEKTATDKK. A disordered region spans residues 558–606; sequence NKAGDIKTAAEKTATDKKRERRKKKYQKRMKIKEKEKRRKLLEKSSVDQ. Residues 574–604 adopt a coiled-coil conformation; that stretch reads KKRERRKKKYQKRMKIKEKEKRRKLLEKSSV. Residues 576–598 show a composition bias toward basic residues; sequence RERRKKKYQKRMKIKEKEKRRKL. Lys609 carries the post-translational modification N6-acetyllysine. Residues Lys632 and Lys649 each participate in a glycyl lysine isopeptide (Lys-Gly) (interchain with G-Cter in SUMO2) cross-link. Residues 648-670 adopt a coiled-coil conformation; it reads SKLQDQVKMQINDAKKTEKKKKK. The tract at residues 660-681 is disordered; the sequence is DAKKTEKKKKKRQDISVHKLKL. Basic and acidic residues predominate over residues 672-681; sequence QDISVHKLKL.

This sequence belongs to the MPP10 family. In terms of assembly, part of the small subunit (SSU) processome, composed of more than 70 proteins and the RNA chaperone small nucleolar RNA (snoRNA) U3. Component of a heterotrimeric complex containing IMP3, IMP4 and MPHOSPH10. Interacts with IMP3 and IMP4. Phosphorylated in M (mitotic) phase.

It localises to the nucleus. The protein resides in the nucleolus. The protein localises to the chromosome. Functionally, component of the 60-80S U3 small nucleolar ribonucleoprotein (U3 snoRNP). Required for the early cleavages during pre-18S ribosomal RNA processing. Part of the small subunit (SSU) processome, first precursor of the small eukaryotic ribosomal subunit. During the assembly of the SSU processome in the nucleolus, many ribosome biogenesis factors, an RNA chaperone and ribosomal proteins associate with the nascent pre-rRNA and work in concert to generate RNA folding, modifications, rearrangements and cleavage as well as targeted degradation of pre-ribosomal RNA by the RNA exosome. In Homo sapiens (Human), this protein is U3 small nucleolar ribonucleoprotein protein MPP10.